Here is a 223-residue protein sequence, read N- to C-terminus: MKFFIDTANLDEIKAAAELGLLDGVTTNPSLIAKIVADPANFTYEDFKKHIAAICEIVDGPISAEVTTLEAEEMIREGEDLASIHENVVVKCPVTLEGLKAIRHFSSEGIRTNATLVFSPSQALLAAKAGATYVSPFIGRLDDISTDGMALVEQIVAIYDNYGYHTEVIVASVRHPQHVVEAALAGADIATIPFGVIKQLVRHPLTDAGLTKFMEDASVMKKS.

Lys-91 acts as the Schiff-base intermediate with substrate in catalysis.

It belongs to the transaldolase family. Type 3B subfamily.

Its subcellular location is the cytoplasm. It catalyses the reaction D-sedoheptulose 7-phosphate + D-glyceraldehyde 3-phosphate = D-erythrose 4-phosphate + beta-D-fructose 6-phosphate. It functions in the pathway carbohydrate degradation; pentose phosphate pathway; D-glyceraldehyde 3-phosphate and beta-D-fructose 6-phosphate from D-ribose 5-phosphate and D-xylulose 5-phosphate (non-oxidative stage): step 2/3. Its function is as follows. Transaldolase is important for the balance of metabolites in the pentose-phosphate pathway. This is Probable transaldolase from Prosthecochloris aestuarii (strain DSM 271 / SK 413).